Here is a 154-residue protein sequence, read N- to C-terminus: MTVPRTGRPGGIRAAAPSRSGWRTQAPVVAVVALGGGTGAAARYAASLWWPTPAGGFPWTTFGVNAVGCAVIGVFMVVITEVRPAHRLVRPFFGTGVLGGFTTFSTYAVDSRSLFADGRLPTGLAYLAATPLAALTAVWLAAWAARRVLKWRQS.

The next 4 helical transmembrane spans lie at 28-48, 59-79, 91-111, and 124-144; these read VVAVVALGGGTGAAARYAASL, WTTFGVNAVGCAVIGVFMVVI, PFFGTGVLGGFTTFSTYAVDS, and LAYLAATPLAALTAVWLAAWA. The Na(+) site is built by G99 and T102.

This sequence belongs to the fluoride channel Fluc/FEX (TC 1.A.43) family.

It is found in the cell membrane. It carries out the reaction fluoride(in) = fluoride(out). Its activity is regulated as follows. Na(+) is not transported, but it plays an essential structural role and its presence is essential for fluoride channel function. In terms of biological role, fluoride-specific ion channel. Important for reducing fluoride concentration in the cell, thus reducing its toxicity. This chain is Fluoride-specific ion channel FluC 1, found in Streptomyces coelicolor (strain ATCC BAA-471 / A3(2) / M145).